Here is a 563-residue protein sequence, read N- to C-terminus: Tripeptidyl-peptidase 1 (563 aa).

Positions 1-19 (MGLQACLLGLFALILSGKC) are cleaved as a signal peptide. A propeptide spans 20-195 (SYSPEPDQRR…PEPQVTGTVG (176 aa)) (removed in mature form). The cysteines at positions 111 and 122 are disulfide-linked. A Peptidase S53 domain is found at 199–563 (GVTPSVIRKR…PALLKTLLNP (365 aa)). 2 N-linked (GlcNAc...) asparagine glycosylation sites follow: Asn-210 and Asn-222. Catalysis depends on charge relay system residues Glu-272 and Asp-276. N-linked (GlcNAc...) asparagine glycans are attached at residues Asn-286, Asn-313, and Asn-443. Disulfide bonds link Cys-365-Cys-526 and Cys-522-Cys-537. Residue Ser-475 is the Charge relay system of the active site. Ca(2+) contacts are provided by Asp-517 and Val-518. Residues Gly-539, Gly-541, and Asp-543 each coordinate Ca(2+).

Monomer. Interacts with CLN5. Interacts with CLN3. The cofactor is Ca(2+). Activated by autocatalytic proteolytical processing upon acidification. N-glycosylation is required for processing and activity.

It is found in the lysosome. Its subcellular location is the melanosome. The enzyme catalyses Release of an N-terminal tripeptide from a polypeptide, but also has endopeptidase activity.. In terms of biological role, lysosomal serine protease with tripeptidyl-peptidase I activity. May act as a non-specific lysosomal peptidase which generates tripeptides from the breakdown products produced by lysosomal proteinases. Requires substrates with an unsubstituted N-terminus. This is Tripeptidyl-peptidase 1 (TPP1) from Pan troglodytes (Chimpanzee).